The following is a 206-amino-acid chain: Large ribosomal subunit protein uL4 (206 aa).

It belongs to the universal ribosomal protein uL4 family. In terms of assembly, part of the 50S ribosomal subunit.

Its function is as follows. One of the primary rRNA binding proteins, this protein initially binds near the 5'-end of the 23S rRNA. It is important during the early stages of 50S assembly. It makes multiple contacts with different domains of the 23S rRNA in the assembled 50S subunit and ribosome. Forms part of the polypeptide exit tunnel. The chain is Large ribosomal subunit protein uL4 from Jannaschia sp. (strain CCS1).